The sequence spans 259 residues: Pimeloyl-[acyl-carrier protein] methyl ester esterase (259 aa).

The region spanning 16-244 (LVFIHGWGLN…ASHAPFLSHP (229 aa)) is the AB hydrolase-1 domain. Substrate contacts are provided by residues W22, 82–83 (SL), and 143–147 (FFNIQ). The active-site Nucleophile is S82. Catalysis depends on residues D207 and H237. H237 is a binding site for substrate.

The protein belongs to the AB hydrolase superfamily. Carboxylesterase BioH family. In terms of assembly, monomer.

It is found in the cytoplasm. It carries out the reaction 6-carboxyhexanoyl-[ACP] methyl ester + H2O = 6-carboxyhexanoyl-[ACP] + methanol + H(+). It participates in cofactor biosynthesis; biotin biosynthesis. The physiological role of BioH is to remove the methyl group introduced by BioC when the pimeloyl moiety is complete. It allows to synthesize pimeloyl-ACP via the fatty acid synthetic pathway through the hydrolysis of the ester bonds of pimeloyl-ACP esters. This is Pimeloyl-[acyl-carrier protein] methyl ester esterase from Wigglesworthia glossinidia brevipalpis.